The primary structure comprises 238 residues: Large ribosomal subunit protein uL3 (238 aa).

2 disordered regions span residues 140-164 and 212-238; these read SHRSIGSTGGRQDPGKTWKNKKMPG and LPKEAPKPGKFKVAGGEAEAAAQQEGA. N5-methylglutamine is present on Q151. The span at 225-238 shows a compositional bias: low complexity; that stretch reads AGGEAEAAAQQEGA.

This sequence belongs to the universal ribosomal protein uL3 family. Part of the 50S ribosomal subunit. Forms a cluster with proteins L14 and L19. In terms of processing, methylated by PrmB.

Functionally, one of the primary rRNA binding proteins, it binds directly near the 3'-end of the 23S rRNA, where it nucleates assembly of the 50S subunit. The polypeptide is Large ribosomal subunit protein uL3 (Bradyrhizobium diazoefficiens (strain JCM 10833 / BCRC 13528 / IAM 13628 / NBRC 14792 / USDA 110)).